Here is a 716-residue protein sequence, read N- to C-terminus: ATP-dependent DNA helicase DinG (716 aa).

A Helicase ATP-binding domain is found at 17 to 294 (ALQEQIPDFI…TCMEQFRPKT (278 aa)). Residue 54–61 (APTGVGKT) coordinates ATP. Residue cysteine 120 coordinates [4Fe-4S] cluster. Residues 131 to 134 (EPTQ) carry the DEAH box motif. Residues cysteine 194, cysteine 199, and cysteine 205 each coordinate [4Fe-4S] cluster. A DEAH box motif is present at residues 248–251 (DEGH). The Helicase C-terminal domain occupies 517-698 (HIAEMAAFFR…VFPIEQPEVP (182 aa)).

The protein belongs to the helicase family. DinG subfamily. Type 1 sub-subfamily. [4Fe-4S] cluster serves as cofactor.

It carries out the reaction Couples ATP hydrolysis with the unwinding of duplex DNA at the replication fork by translocating in the 5'-3' direction. This creates two antiparallel DNA single strands (ssDNA). The leading ssDNA polymer is the template for DNA polymerase III holoenzyme which synthesizes a continuous strand.. It catalyses the reaction ATP + H2O = ADP + phosphate + H(+). Functionally, DNA-dependent ATPase and 5'-3' DNA helicase. Unwinds D-loops, R-loops, forked DNA and G-quadruplex DNA. This chain is ATP-dependent DNA helicase DinG, found in Escherichia coli O157:H7.